A 1203-amino-acid polypeptide reads, in one-letter code: uncharacterized protein (1203 aa).

This is an uncharacterized protein from Magallana gigas (Pacific oyster).